The sequence spans 409 residues: Elongation factor Tu (409 aa).

Residues 10–214 enclose the tr-type G domain; sequence KPHLNIGTIG…AVDSFIPTPE (205 aa). The tract at residues 19 to 26 is G1; it reads GHVDHGKT. Residue 19–26 coordinates GTP; it reads GHVDHGKT. Thr26 is a Mg(2+) binding site. Positions 60–64 are G2; that stretch reads GITIN. The G3 stretch occupies residues 81–84; the sequence is DCPG. GTP contacts are provided by residues 81 to 85 and 136 to 139; these read DCPGH and NKED. Residues 136-139 form a G4 region; the sequence is NKED. A G5 region spans residues 174–176; it reads SGL.

Belongs to the TRAFAC class translation factor GTPase superfamily. Classic translation factor GTPase family. EF-Tu/EF-1A subfamily. Monomer.

Its subcellular location is the cytoplasm. The enzyme catalyses GTP + H2O = GDP + phosphate + H(+). In terms of biological role, GTP hydrolase that promotes the GTP-dependent binding of aminoacyl-tRNA to the A-site of ribosomes during protein biosynthesis. The chain is Elongation factor Tu from Nostoc punctiforme (strain ATCC 29133 / PCC 73102).